Here is a 1266-residue protein sequence, read N- to C-terminus: Intermembrane phospholipid transporter YhdP (1266 aa).

The Cytoplasmic segment spans residues 1-5 (MRRLP). Residues 6–26 (GILLLTGAALVVIAALLVSGL) form a helical membrane-spanning segment. At 27 to 1266 (RIALPHLDAW…LRQPRKEKAQ (1240 aa)) the chain is on the periplasmic side. Positions 94–103 (VWQSLLHMRW) are P-helix. A C-helix_2 region spans residues 1121-1144 (HAGQLLRLLSVDALMRKLRFDFRD). Residues 1203–1237 (ISATVGVAAAFAVNPIVGAAVFAASKVLGPLWSKV) form a C-helix_1 region.

The protein resides in the cell inner membrane. In terms of biological role, involved in outer membrane lipid homeostasis. Likely transports phospholipids between the inner membrane and the outer membrane. It would provide a bridge-like structure that protects phospholipids as they travel across the periplasm. The phosphate-containing molecules are captured along the length of a hydrophobic groove that is continuous along all but the extreme N-terminus of the protein. It also appears to control, directly or indirectly, levels of cyclic enterobacterial common antigen (cyclic ECA), a soluble cyclic ECA molecule present in the periplasm. Its function is as follows. TamB, YdbH and YhdP are redundant, but not equivalent, in performing an essential function for growth and maintaining lipid homeostasis in the outer membrane. The transport functions of TamB and YhdP could be differentiated according to the fatty acid saturation state of the phospholipids, with TamB transporting more unsaturated phospholipids and YhdP more saturated phospholipids. Any of these three proteins is sufficient for growth. This Escherichia coli (strain K12) protein is Intermembrane phospholipid transporter YhdP (yhdP).